Here is a 559-residue protein sequence, read N- to C-terminus: Dihydroxy-acid dehydratase (559 aa).

Position 78 (Asp-78) interacts with Mg(2+). Cys-119 provides a ligand contact to [2Fe-2S] cluster. Mg(2+)-binding residues include Asp-120 and Lys-121. At Lys-121 the chain carries N6-carboxylysine. Cys-192 provides a ligand contact to [2Fe-2S] cluster. Residue Glu-446 coordinates Mg(2+). Catalysis depends on Ser-472, which acts as the Proton acceptor.

The protein belongs to the IlvD/Edd family. In terms of assembly, homodimer. It depends on [2Fe-2S] cluster as a cofactor. Mg(2+) is required as a cofactor.

It catalyses the reaction (2R)-2,3-dihydroxy-3-methylbutanoate = 3-methyl-2-oxobutanoate + H2O. It carries out the reaction (2R,3R)-2,3-dihydroxy-3-methylpentanoate = (S)-3-methyl-2-oxopentanoate + H2O. It functions in the pathway amino-acid biosynthesis; L-isoleucine biosynthesis; L-isoleucine from 2-oxobutanoate: step 3/4. The protein operates within amino-acid biosynthesis; L-valine biosynthesis; L-valine from pyruvate: step 3/4. Functions in the biosynthesis of branched-chain amino acids. Catalyzes the dehydration of (2R,3R)-2,3-dihydroxy-3-methylpentanoate (2,3-dihydroxy-3-methylvalerate) into 2-oxo-3-methylpentanoate (2-oxo-3-methylvalerate) and of (2R)-2,3-dihydroxy-3-methylbutanoate (2,3-dihydroxyisovalerate) into 2-oxo-3-methylbutanoate (2-oxoisovalerate), the penultimate precursor to L-isoleucine and L-valine, respectively. This chain is Dihydroxy-acid dehydratase, found in Wolinella succinogenes (strain ATCC 29543 / DSM 1740 / CCUG 13145 / JCM 31913 / LMG 7466 / NCTC 11488 / FDC 602W) (Vibrio succinogenes).